The primary structure comprises 312 residues: Pyrimidine-specific ribonucleoside hydrolase RihA (312 aa).

H240 is a catalytic residue.

The protein belongs to the IUNH family. RihA subfamily.

In terms of biological role, hydrolyzes cytidine or uridine to ribose and cytosine or uracil, respectively. This chain is Pyrimidine-specific ribonucleoside hydrolase RihA, found in Shewanella woodyi (strain ATCC 51908 / MS32).